Here is a 111-residue protein sequence, read N- to C-terminus: uncharacterized protein (111 aa).

It localises to the cytoplasm. Its subcellular location is the nucleus. This is an uncharacterized protein from Saccharomyces cerevisiae (strain ATCC 204508 / S288c) (Baker's yeast).